Consider the following 323-residue polypeptide: 4-hydroxyphenylpyruvate 3-dimethylallyltransferase (323 aa).

Substrate-binding residues include Arg160 and Glu281.

The protein belongs to the aromatic prenyltransferase family. In terms of assembly, monomer.

Its subcellular location is the cytoplasm. The enzyme catalyses 3-(4-hydroxyphenyl)pyruvate + dimethylallyl diphosphate = 3-dimethylallyl-4-hydroxyphenylpyruvate + diphosphate. The protein operates within antibiotic biosynthesis; novobiocin biosynthesis. Its function is as follows. Magnesium-independent aromatic prenyltransferase that catalyzes the irreversible transfer of a dimethylallyl group to 4-hydroxyphenylpyruvate to produce the ring A structure in the novobiocin biosynthesis pathway. Novobiocin is an aminocoumarin family antibiotic that targets bacterial DNA gyrases. It is able to prenylate many different compounds, including the phenylpropanoids 4-coumarate and caffeate, the plant polyketide resveratrol, the (iso)flavonoid naringenin, apigenin, daidzein and genistein, and the dihydroxynaphthalenes 1,6-DHN and 2,7-DHN. This chain is 4-hydroxyphenylpyruvate 3-dimethylallyltransferase, found in Streptomyces niveus (Streptomyces spheroides).